A 291-amino-acid chain; its full sequence is Exosome complex exonuclease RRP42 (291 aa).

At alanine 2 the chain carries N-acetylalanine. Lysine 116 carries the N6-acetyllysine modification.

This sequence belongs to the RNase PH family. In terms of assembly, component of the RNA exosome core complex (Exo-9), composed of EXOSC1, EXOSC2, EXOSC3, EXOSC4, EXOSC5, EXOSC6, EXOSC7, EXOSC8 and EXOSC9; within the complex interacts with EXOSC2 and EXOSC4. The catalytically inactive RNA exosome core complex (Exo-9) associates with the catalytic subunit EXOSC10/RRP6. Exo-9 may associate with DIS3 to form the nucleolar exosome complex, or DIS3L to form the cytoplasmic exosome complex. Exo-9 is formed by a hexameric base ring consisting of the heterodimers EXOSC4-EXOSC9, EXOSC5-EXOSC8 and EXOSC6-EXOSC7, and a cap ring consisting of EXOSC1, EXOSC2 and EXOSC3. The RNA exosome complex associates with cofactors C1D/RRP47, MPHOSPH6/MPP6 and MTREX/MTR4. Interacts with ZC3HAV1. Interacts with DIS3; the interaction is direct.

It localises to the nucleus. Its subcellular location is the nucleolus. It is found in the cytoplasm. Functionally, non-catalytic component of the RNA exosome complex which has 3'-&gt;5' exoribonuclease activity and participates in a multitude of cellular RNA processing and degradation events. In the nucleus, the RNA exosome complex is involved in proper maturation of stable RNA species such as rRNA, snRNA and snoRNA, in the elimination of RNA processing by-products and non-coding 'pervasive' transcripts, such as antisense RNA species and promoter-upstream transcripts (PROMPTs), and of mRNAs with processing defects, thereby limiting or excluding their export to the cytoplasm. The RNA exosome may be involved in Ig class switch recombination (CSR) and/or Ig variable region somatic hypermutation (SHM) by targeting AICDA deamination activity to transcribed dsDNA substrates. In the cytoplasm, the RNA exosome complex is involved in general mRNA turnover and specifically degrades inherently unstable mRNAs containing AU-rich elements (AREs) within their 3' untranslated regions, and in RNA surveillance pathways, preventing translation of aberrant mRNAs. It seems to be involved in degradation of histone mRNA. The catalytic inactive RNA exosome core complex of 9 subunits (Exo-9) is proposed to play a pivotal role in the binding and presentation of RNA for ribonucleolysis, and to serve as a scaffold for the association with catalytic subunits and accessory proteins or complexes. This is Exosome complex exonuclease RRP42 (Exosc7) from Mus musculus (Mouse).